A 444-amino-acid chain; its full sequence is Maintenance of mitochondrial morphology protein 1 (444 aa).

Topologically, residues 1–110 are lumenal; that stretch reads MNNLDNLAGN…SFSGWSFIEG (110 aa). The chain crosses the membrane as a helical span at residues 111–131; sequence FIIGQFSVIIVLIFFIKFFVF. At 132–444 the chain is on the cytoplasmic side; the sequence is SDGSSSNSSN…TDDVPLSKAE (313 aa). The SMP-LTD domain maps to 207-419; it reads PSESLDWFNV…EPRFQCIRLP (213 aa).

The protein belongs to the MMM1 family. Homodimer. Component of the ER-mitochondria encounter structure (ERMES) or MDM complex, composed of MMM1, MDM10, MDM12 and MDM34. An MMM1 homodimer associates with one molecule of MDM12 on each side in a pairwise head-to-tail manner, and the SMP-LTD domains of MMM1 and MDM12 generate a continuous hydrophobic tunnel for phospholipid trafficking.

It localises to the endoplasmic reticulum membrane. Its function is as follows. Component of the ERMES/MDM complex, which serves as a molecular tether to connect the endoplasmic reticulum (ER) and mitochondria. Components of this complex are involved in the control of mitochondrial shape and protein biogenesis, and function in nonvesicular lipid trafficking between the ER and mitochondria. The MDM12-MMM1 subcomplex functions in the major beta-barrel assembly pathway that is responsible for biogenesis of all outer membrane beta-barrel proteins, and acts in a late step after the SAM complex. The MDM10-MDM12-MMM1 subcomplex further acts in the TOM40-specific pathway after the action of the MDM12-MMM1 complex. Essential for establishing and maintaining the structure of mitochondria and maintenance of mtDNA nucleoids. This Vanderwaltozyma polyspora (strain ATCC 22028 / DSM 70294 / BCRC 21397 / CBS 2163 / NBRC 10782 / NRRL Y-8283 / UCD 57-17) (Kluyveromyces polysporus) protein is Maintenance of mitochondrial morphology protein 1.